The chain runs to 461 residues: Argininosuccinate lyase (461 aa).

This sequence belongs to the lyase 1 family. Argininosuccinate lyase subfamily.

It localises to the cytoplasm. The catalysed reaction is 2-(N(omega)-L-arginino)succinate = fumarate + L-arginine. The protein operates within amino-acid biosynthesis; L-arginine biosynthesis; L-arginine from L-ornithine and carbamoyl phosphate: step 3/3. This Symbiobacterium thermophilum (strain DSM 24528 / JCM 14929 / IAM 14863 / T) protein is Argininosuccinate lyase.